The primary structure comprises 167 residues: Xanthine-guanine phosphoribosyltransferase (167 aa).

Residues 47–48 (RG), glutamine 79, and 102–110 (DDLVDSGKT) contribute to the 5-phospho-alpha-D-ribose 1-diphosphate site. Glutamine 79 is a binding site for GMP. Aspartate 103 contacts Mg(2+). Guanine-binding residues include aspartate 106 and isoleucine 149. Xanthine-binding residues include aspartate 106 and isoleucine 149. GMP-binding positions include 106-110 (DSGKT) and 148-149 (WI).

Belongs to the purine/pyrimidine phosphoribosyltransferase family. XGPT subfamily. Homotetramer. Requires Mg(2+) as cofactor.

Its subcellular location is the cell inner membrane. The catalysed reaction is GMP + diphosphate = guanine + 5-phospho-alpha-D-ribose 1-diphosphate. It catalyses the reaction XMP + diphosphate = xanthine + 5-phospho-alpha-D-ribose 1-diphosphate. The enzyme catalyses IMP + diphosphate = hypoxanthine + 5-phospho-alpha-D-ribose 1-diphosphate. It functions in the pathway purine metabolism; GMP biosynthesis via salvage pathway; GMP from guanine: step 1/1. The protein operates within purine metabolism; XMP biosynthesis via salvage pathway; XMP from xanthine: step 1/1. Purine salvage pathway enzyme that catalyzes the transfer of the ribosyl-5-phosphate group from 5-phospho-alpha-D-ribose 1-diphosphate (PRPP) to the N9 position of the 6-oxopurines guanine and xanthine to form the corresponding ribonucleotides GMP (guanosine 5'-monophosphate) and XMP (xanthosine 5'-monophosphate), with the release of PPi. To a lesser extent, also acts on hypoxanthine. This chain is Xanthine-guanine phosphoribosyltransferase, found in Cereibacter sphaeroides (strain ATCC 17025 / ATH 2.4.3) (Rhodobacter sphaeroides).